The primary structure comprises 463 residues: Argininosuccinate lyase (463 aa).

It belongs to the lyase 1 family. Argininosuccinate lyase subfamily.

It is found in the cytoplasm. It catalyses the reaction 2-(N(omega)-L-arginino)succinate = fumarate + L-arginine. It functions in the pathway amino-acid biosynthesis; L-arginine biosynthesis; L-arginine from L-ornithine and carbamoyl phosphate: step 3/3. This chain is Argininosuccinate lyase, found in Methylorubrum extorquens (strain CM4 / NCIMB 13688) (Methylobacterium extorquens).